Here is a 166-residue protein sequence, read N- to C-terminus: Monothiol glutaredoxin-3 (166 aa).

A Glutaredoxin domain is found at 56–159 (DSTDFEVFLE…STLDEWTHNK (104 aa)). C76 lines the [2Fe-2S] cluster pocket.

The protein belongs to the glutaredoxin family. Monothiol subfamily. Homodimer.

Its subcellular location is the nucleus. Monothiol glutaredoxin involved in the biogenesis of iron-sulfur clusters. Binds one iron-sulfur cluster per dimer. The iron-sulfur cluster is bound between subunits, and is complexed by a bound glutathione and a cysteine residue from each subunit. The protein is Monothiol glutaredoxin-3 (grx3) of Schizosaccharomyces pombe (strain 972 / ATCC 24843) (Fission yeast).